We begin with the raw amino-acid sequence, 88 residues long: Small ribosomal subunit protein bS18 (88 aa).

The segment at 1 to 26 is disordered; sequence MAFAQSGGAGGGGGQRRPFFRRRKTC.

This sequence belongs to the bacterial ribosomal protein bS18 family. Part of the 30S ribosomal subunit. Forms a tight heterodimer with protein bS6.

Its function is as follows. Binds as a heterodimer with protein bS6 to the central domain of the 16S rRNA, where it helps stabilize the platform of the 30S subunit. In Xanthobacter autotrophicus (strain ATCC BAA-1158 / Py2), this protein is Small ribosomal subunit protein bS18.